A 309-amino-acid chain; its full sequence is tRNA uridine(34) hydroxylase (309 aa).

Residues 130-225 enclose the Rhodanese domain; it reads RGEEVVFFDG…YGEKYGNDGL (96 aa). Cysteine 185 acts as the Cysteine persulfide intermediate in catalysis.

The protein belongs to the TrhO family.

The enzyme catalyses uridine(34) in tRNA + AH2 + O2 = 5-hydroxyuridine(34) in tRNA + A + H2O. Its function is as follows. Catalyzes oxygen-dependent 5-hydroxyuridine (ho5U) modification at position 34 in tRNAs. This chain is tRNA uridine(34) hydroxylase, found in Corynebacterium aurimucosum (strain ATCC 700975 / DSM 44827 / CIP 107346 / CN-1) (Corynebacterium nigricans).